We begin with the raw amino-acid sequence, 146 residues long: VHWTAEEKQLITCLWGKVDVPTVGADALAGMLVMYPWTQRFFADFGNLSSATAICGNPKVRAHGKKVLTAFGDAIKNLDNIKDTFAKLSELHCDKLHVDPENFKLLGNVLIIVLAGHYGKDFTPACHAAYQKLVNVVAHALARRYH.

The Globin domain maps to 2 to 146; sequence HWTAEEKQLI…VAHALARRYH (145 aa). Heme b contacts are provided by His-63 and His-92.

It belongs to the globin family. Heterotetramer of two alpha chains and two beta chains. Red blood cells.

Its function is as follows. Involved in oxygen transport from the lung to the various peripheral tissues. The protein is Hemoglobin subunit beta-2 of Iguana iguana (Common iguana).